The sequence spans 233 residues: ATP-dependent Clp protease proteolytic subunit 2 (233 aa).

The Nucleophile role is filled by Ser116. The active site involves His141. The disordered stretch occupies residues 214 to 233 (EGLKSIQPNGEAADDSEDDA).

Belongs to the peptidase S14 family. Fourteen ClpP subunits assemble into 2 heptameric rings which stack back to back to give a disk-like structure with a central cavity, resembling the structure of eukaryotic proteasomes.

The protein resides in the cytoplasm. The enzyme catalyses Hydrolysis of proteins to small peptides in the presence of ATP and magnesium. alpha-casein is the usual test substrate. In the absence of ATP, only oligopeptides shorter than five residues are hydrolyzed (such as succinyl-Leu-Tyr-|-NHMec, and Leu-Tyr-Leu-|-Tyr-Trp, in which cleavage of the -Tyr-|-Leu- and -Tyr-|-Trp bonds also occurs).. In terms of biological role, cleaves peptides in various proteins in a process that requires ATP hydrolysis. Has a chymotrypsin-like activity. Plays a major role in the degradation of misfolded proteins. The polypeptide is ATP-dependent Clp protease proteolytic subunit 2 (Salinibacter ruber (strain DSM 13855 / M31)).